We begin with the raw amino-acid sequence, 333 residues long: MTGTGPHGDPAEDPAGPDDTAAETDGPAEPTEPVDASEAEMTDTTETTAQTGTTAEADASEEFEGPRRRARRERAERRAARDRAMAIEQARREAKRRAVAGALDPTKSVPRNTIRGLKVLMWAALVSVLAVALGLLLYFTPIMSARNVEVSGLAEIPQEEVLTAAAVAPGTPLLQVDTDAVAERVATIRRVATARVQREYPSTLKISIVERVPVVVKDYPDGPHLFDRDGVDFATGPAPLALPYLDADNPGPNDPATRAALDVMMALPPDVAAQVGRIAAPSVASITLTLIDGRVVVWGTDDRTQEKALKLAALLTQPGTTYDVSSPDLPTVK.

A disordered region spans residues 1-99 (MTGTGPHGDP…ARREAKRRAV (99 aa)). Topologically, residues 1-118 (MTGTGPHGDP…VPRNTIRGLK (118 aa)) are cytoplasmic. Over residues 11–22 (AEDPAGPDDTAA) the composition is skewed to acidic residues. The span at 44-57 (TTETTAQTGTTAEA) shows a compositional bias: low complexity. Residues 73-92 (ERAERRAARDRAMAIEQARR) show a composition bias toward basic and acidic residues. Residues 119–139 (VLMWAALVSVLAVALGLLLYF) form a helical membrane-spanning segment. Topologically, residues 140–333 (TPIMSARNVE…VSSPDLPTVK (194 aa)) are extracellular. The region spanning 143 to 211 (MSARNVEVSG…STLKISIVER (69 aa)) is the POTRA domain.

The protein belongs to the FtsQ/DivIB family. FtsQ subfamily.

It localises to the cell membrane. Functionally, essential cell division protein. In Mycolicibacterium smegmatis (strain ATCC 700084 / mc(2)155) (Mycobacterium smegmatis), this protein is Cell division protein FtsQ.